Here is a 415-residue protein sequence, read N- to C-terminus: Coiled-coil domain-containing glutamate-rich protein 1 (415 aa).

The span at 1–11 shows a compositional bias: basic and acidic residues; it reads MTQTLDTKEDP. Disordered regions lie at residues 1–20, 29–64, 133–162, 202–241, and 255–372; these read MTQT…GWAS, FGPR…QQYG, RPPG…SPPV, QEKL…GQED, and PSLV…PLEM. 2 stretches are compositionally biased toward basic residues: residues 31–46 and 135–156; these read PRRR…RPRY and PGRK…RRSA. 2 coiled-coil regions span residues 197–224 and 264–366; these read EDMR…STAS and DEEK…EEEN. The span at 211–220 shows a compositional bias: low complexity; that stretch reads ALRAQQAQAA. The segment covering 275–363 has biased composition (acidic residues); it reads VEEEEEGERE…EGLAEDEQTE (89 aa).

It is found in the nucleus. Regulator of histone epigenetic modifications and chromatin compaction into the sperm head, required for histone-to-protamine (HTP) transition. HTP is a key event in which somatic histones are first replaced by testis-specific histone variants, then transition proteins (TNPs) are incorporated into the spermatid nucleus, and finally protamines (PRMs) replace the TNPs to promote chromatin condensation. The polypeptide is Coiled-coil domain-containing glutamate-rich protein 1 (CCER1) (Bos taurus (Bovine)).